Consider the following 396-residue polypeptide: Flavohemoprotein (396 aa).

One can recognise a Globin domain in the interval 1 to 136 (MLDNQTIATV…LADIFINREE (136 aa)). His-85 contributes to the heme b binding site. Residues Tyr-95 and Glu-135 each act as charge relay system in the active site. A reductase region spans residues 147 to 396 (GGWRGLRPFR…YECFGPHKVI (250 aa)). The region spanning 150 to 255 (RGLRPFRINR…TAPRGDFFLD (106 aa)) is the FAD-binding FR-type domain. FAD is bound by residues Tyr-188 and 204–207 (RQYS). 268-273 (GVGLTP) is a binding site for NADP(+). 389–392 (CFGP) contributes to the FAD binding site.

It belongs to the globin family. Two-domain flavohemoproteins subfamily. This sequence in the C-terminal section; belongs to the flavoprotein pyridine nucleotide cytochrome reductase family. Heme b serves as cofactor. The cofactor is FAD.

The enzyme catalyses 2 nitric oxide + NADPH + 2 O2 = 2 nitrate + NADP(+) + H(+). It catalyses the reaction 2 nitric oxide + NADH + 2 O2 = 2 nitrate + NAD(+) + H(+). Functionally, is involved in NO detoxification in an aerobic process, termed nitric oxide dioxygenase (NOD) reaction that utilizes O(2) and NAD(P)H to convert NO to nitrate, which protects the bacterium from various noxious nitrogen compounds. Therefore, plays a central role in the inducible response to nitrosative stress. The polypeptide is Flavohemoprotein (Photorhabdus laumondii subsp. laumondii (strain DSM 15139 / CIP 105565 / TT01) (Photorhabdus luminescens subsp. laumondii)).